The following is a 77-amino-acid chain: Small ribosomal subunit protein bS18 (77 aa).

It belongs to the bacterial ribosomal protein bS18 family. As to quaternary structure, part of the 30S ribosomal subunit. Forms a tight heterodimer with protein bS6.

In terms of biological role, binds as a heterodimer with protein bS6 to the central domain of the 16S rRNA, where it helps stabilize the platform of the 30S subunit. The chain is Small ribosomal subunit protein bS18 from Shouchella clausii (strain KSM-K16) (Alkalihalobacillus clausii).